We begin with the raw amino-acid sequence, 539 residues long: Acid-sensing ion channel 4-A (539 aa).

At M1–L68 the chain is on the cytoplasmic side. The helical transmembrane segment at W69–I89 threads the bilayer. Residues S90 to G432 lie on the Extracellular side of the membrane. Cystine bridges form between C116/C200 and C178/C185. 6 N-linked (GlcNAc...) asparagine glycosylation sites follow: N136, N165, N179, N184, N206, and N241. Cystine bridges form between C294-C369, C313-C365, C317-C363, C326-C347, and C328-C340. An N-linked (GlcNAc...) asparagine glycan is attached at N370. A helical transmembrane segment spans residues L433 to L453. The GAS motif; ion selectivity filter signature appears at G446 to S448. Over E454–C539 the chain is Cytoplasmic. Positions Q474–N494 are disordered.

The protein belongs to the amiloride-sensitive sodium channel (TC 1.A.6) family. ASIC4 subfamily. As to quaternary structure, homotrimer. Heterotrimer; with other ASIC proteins producing functional channels. Expressed in central nervous system.

Its subcellular location is the cell membrane. It catalyses the reaction Na(+)(in) = Na(+)(out). With respect to regulation, inhibited by the diuretic drug amiloride. Its function is as follows. Could form pH-gated trimeric sodium channels and function as a postsynaptic excitatory receptors in the nervous system. In Danio rerio (Zebrafish), this protein is Acid-sensing ion channel 4-A.